Reading from the N-terminus, the 64-residue chain is uncharacterized protein (64 aa).

This is an uncharacterized protein from African swine fever virus (strain Badajoz 1971 Vero-adapted) (Ba71V).